The sequence spans 357 residues: Holliday junction branch migration complex subunit RuvB (357 aa).

Positions 1 to 15 (MAIQSDSLSSLPDSP) are enriched in low complexity. Positions 1 to 30 (MAIQSDSLSSLPDSPRIVAPQPVSPNEESI) are disordered. Residues 13 to 195 (DSPRIVAPQP…FGIVSRLEFY (183 aa)) form a large ATPase domain (RuvB-L) region. ATP contacts are provided by residues Leu-34, Arg-35, Gly-76, Lys-79, Thr-80, Thr-81, 142-144 (EDF), Arg-185, Tyr-195, and Arg-232. Thr-80 serves as a coordination point for Mg(2+). The segment at 196-266 (NTDELARIVT…AAGRALAMLD (71 aa)) is small ATPAse domain (RuvB-S). The tract at residues 269-357 (PQGLDVMDRK…SGGTGELFSK (89 aa)) is head domain (RuvB-H). The DNA site is built by Arg-305, Arg-324, and Arg-329.

The protein belongs to the RuvB family. In terms of assembly, homohexamer. Forms an RuvA(8)-RuvB(12)-Holliday junction (HJ) complex. HJ DNA is sandwiched between 2 RuvA tetramers; dsDNA enters through RuvA and exits via RuvB. An RuvB hexamer assembles on each DNA strand where it exits the tetramer. Each RuvB hexamer is contacted by two RuvA subunits (via domain III) on 2 adjacent RuvB subunits; this complex drives branch migration. In the full resolvosome a probable DNA-RuvA(4)-RuvB(12)-RuvC(2) complex forms which resolves the HJ.

The protein resides in the cytoplasm. It carries out the reaction ATP + H2O = ADP + phosphate + H(+). Functionally, the RuvA-RuvB-RuvC complex processes Holliday junction (HJ) DNA during genetic recombination and DNA repair, while the RuvA-RuvB complex plays an important role in the rescue of blocked DNA replication forks via replication fork reversal (RFR). RuvA specifically binds to HJ cruciform DNA, conferring on it an open structure. The RuvB hexamer acts as an ATP-dependent pump, pulling dsDNA into and through the RuvAB complex. RuvB forms 2 homohexamers on either side of HJ DNA bound by 1 or 2 RuvA tetramers; 4 subunits per hexamer contact DNA at a time. Coordinated motions by a converter formed by DNA-disengaged RuvB subunits stimulates ATP hydrolysis and nucleotide exchange. Immobilization of the converter enables RuvB to convert the ATP-contained energy into a lever motion, pulling 2 nucleotides of DNA out of the RuvA tetramer per ATP hydrolyzed, thus driving DNA branch migration. The RuvB motors rotate together with the DNA substrate, which together with the progressing nucleotide cycle form the mechanistic basis for DNA recombination by continuous HJ branch migration. Branch migration allows RuvC to scan DNA until it finds its consensus sequence, where it cleaves and resolves cruciform DNA. The chain is Holliday junction branch migration complex subunit RuvB from Bordetella pertussis (strain Tohama I / ATCC BAA-589 / NCTC 13251).